We begin with the raw amino-acid sequence, 78 residues long: UPF0369 protein RP167 (78 aa).

Belongs to the SDHAF4 family.

This Rickettsia prowazekii (strain Madrid E) protein is UPF0369 protein RP167.